The primary structure comprises 353 residues: MTQRKIIHIDCDCFYAAIEMRDEPELAGKPLAVGGSAERRGVIATCNYEARAYGVRSAMSSRHALKLCPDLTIVKPRMEAYKEASREIHTIFRDYTDLIEPLSLDEAFLDVSDAGHFSGSATRIAQDIRRRVSNQLHITVSAGVAPNKFLAKIASDWKKPNGLFVITPDQVEDFVASLPVTKLHGVGKVTADKLGRLGIVDCADLRGRSKLALVREFGSFGERLWSLAHGIDDRPVQNDSRRQSVSVENTYDTDLPDLAACLEKLPALLETLGNRMARMEGQYRPGKPFVKVKFHDFTQTTLEQSGAGRDLGSYEQLLAQAFARGAKPVRLLGIGVRLHDLRAAHEQLELFSQ.

The 182-residue stretch at 6–187 (IIHIDCDCFY…LPVTKLHGVG (182 aa)) folds into the UmuC domain. The Mg(2+) site is built by aspartate 10 and aspartate 105. Glutamate 106 is an active-site residue.

The protein belongs to the DNA polymerase type-Y family. Monomer. Mg(2+) serves as cofactor.

Its subcellular location is the cytoplasm. It catalyses the reaction DNA(n) + a 2'-deoxyribonucleoside 5'-triphosphate = DNA(n+1) + diphosphate. In terms of biological role, poorly processive, error-prone DNA polymerase involved in untargeted mutagenesis. Copies undamaged DNA at stalled replication forks, which arise in vivo from mismatched or misaligned primer ends. These misaligned primers can be extended by PolIV. Exhibits no 3'-5' exonuclease (proofreading) activity. May be involved in translesional synthesis, in conjunction with the beta clamp from PolIII. The protein is DNA polymerase IV of Pseudomonas savastanoi pv. phaseolicola (strain 1448A / Race 6) (Pseudomonas syringae pv. phaseolicola (strain 1448A / Race 6)).